Reading from the N-terminus, the 105-residue chain is Putative regulatory protein COPRO5265_1186 (105 aa).

Residues 76–105 form a disordered region; the sequence is RLEEEEEEEERTEPITEQEAELEEESGEDV. Over residues 78-105 the composition is skewed to acidic residues; sequence EEEEEEEERTEPITEQEAELEEESGEDV.

It belongs to the RemA family.

This Coprothermobacter proteolyticus (strain ATCC 35245 / DSM 5265 / OCM 4 / BT) protein is Putative regulatory protein COPRO5265_1186.